The primary structure comprises 85 residues: Large ribosomal subunit protein bL27 (85 aa).

Residues 1 to 22 (MAHKKAGGSSRNGRDSHSKRLG) form a disordered region.

It belongs to the bacterial ribosomal protein bL27 family.

The polypeptide is Large ribosomal subunit protein bL27 (Nitrosomonas europaea (strain ATCC 19718 / CIP 103999 / KCTC 2705 / NBRC 14298)).